The sequence spans 215 residues: Chaperone protein TorD (215 aa).

This sequence belongs to the TorD/DmsD family. TorD subfamily.

The protein localises to the cytoplasm. Its function is as follows. Involved in the biogenesis of TorA. Acts on TorA before the insertion of the molybdenum cofactor and, as a result, probably favors a conformation of the apoenzyme that is competent for acquiring the cofactor. The protein is Chaperone protein TorD of Vibrio vulnificus (strain YJ016).